We begin with the raw amino-acid sequence, 355 residues long: Guanine nucleotide-binding protein G(z) subunit alpha (355 aa).

Residues 1–14 (MGCRQSSEEKEAAR) show a composition bias toward basic and acidic residues. The interval 1-26 (MGCRQSSEEKEAARRSRRIDRHLRSE) is disordered. Residue Gly-2 is the site of N-myristoyl glycine attachment. Cys-3 carries the S-palmitoyl cysteine lipid modification. The 324-residue stretch at 32–355 (REIKLLLLGT…QNNLKYIGLC (324 aa)) folds into the G-alpha domain. Positions 35–48 (KLLLLGTSNSGKST) are G1 motif. GTP-binding positions include 40–47 (GTSNSGKS), 176–182 (LRSRDMT), 201–205 (DVGGQ), 270–273 (NKKD), and Ala-327. Residues Ser-47 and Thr-182 each coordinate Mg(2+). A G2 motif region spans residues 174 to 182 (DILRSRDMT). Residues 197-206 (FKMVDVGGQR) form a G3 motif region. Positions 266 to 273 (ILFLNKKD) are G4 motif. Residues 325-330 (TCATDT) form a G5 motif region.

The protein belongs to the G-alpha family. G(i/o/t/z) subfamily. G-proteins are composed of 3 units; alpha, beta and gamma. The alpha chain contains the guanine nucleotide binding site. Interacts with ADGRB2.

The protein resides in the membrane. In terms of biological role, guanine nucleotide-binding proteins (G proteins) are involved as modulators or transducers in various transmembrane signaling systems. The polypeptide is Guanine nucleotide-binding protein G(z) subunit alpha (Gnaz) (Mus musculus (Mouse)).